The primary structure comprises 258 residues: Phosphate import ATP-binding protein PstB (258 aa).

The region spanning 5-247 (IDVSGLNAYY…ERIFSNPSVQ (243 aa)) is the ABC transporter domain. 37 to 44 (GPSGCGKS) provides a ligand contact to ATP.

Belongs to the ABC transporter superfamily. Phosphate importer (TC 3.A.1.7) family. As to quaternary structure, the complex is composed of two ATP-binding proteins (PstB), two transmembrane proteins (PstC and PstA) and a solute-binding protein (PstS).

It is found in the cell membrane. The catalysed reaction is phosphate(out) + ATP + H2O = ADP + 2 phosphate(in) + H(+). Part of the ABC transporter complex PstSACB involved in phosphate import. Responsible for energy coupling to the transport system. The chain is Phosphate import ATP-binding protein PstB from Streptomyces coelicolor (strain ATCC BAA-471 / A3(2) / M145).